Reading from the N-terminus, the 681-residue chain is tRNA wybutosine-synthesizing protein 4 (681 aa).

The span at 1 to 11 (MSNKNQRKTKS) shows a compositional bias: basic residues. Residues 1 to 21 (MSNKNQRKTKSKDREVRKTND) form a disordered region. S-adenosyl-L-methionine contacts are provided by residues arginine 66, glycine 92, aspartate 119, 165 to 166 (NL), and glutamate 193.

Belongs to the methyltransferase superfamily. LCMT family.

The catalysed reaction is 7-[(3S)-3-amino-3-carboxypropyl]wyosine(37) in tRNA(Phe) + S-adenosyl-L-methionine = 7-[(3S)-(3-amino-3-methoxycarbonyl)propyl]wyosine(37) in tRNA(Phe) + S-adenosyl-L-homocysteine. It carries out the reaction 7-[(3S)-(3-amino-3-methoxycarbonyl)propyl]wyosine(37) in tRNA(Phe) + S-adenosyl-L-methionine + CO2 = wybutosine(37) in tRNA(Phe) + S-adenosyl-L-homocysteine + 2 H(+). Its pathway is tRNA modification; wybutosine-tRNA(Phe) biosynthesis. Probable S-adenosyl-L-methionine-dependent methyltransferase that acts as a component of the wybutosine biosynthesis pathway. Wybutosine is a hyper modified guanosine with a tricyclic base found at the 3'-position adjacent to the anticodon of eukaryotic phenylalanine tRNA. May methylate the carboxyl group of leucine residues to form alpha-leucine ester residues. The chain is tRNA wybutosine-synthesizing protein 4 (ppm2) from Schizosaccharomyces pombe (strain 972 / ATCC 24843) (Fission yeast).